We begin with the raw amino-acid sequence, 366 residues long: Protein-glutamate methylesterase/protein-glutamine glutaminase 2 (366 aa).

The Response regulatory domain occupies 3 to 119 (RLLIADDSAL…SLELDRLRPL (117 aa)). D53 bears the 4-aspartylphosphate mark. Positions 149–168 (AASSPRAKAARRGAARQRAK) are disordered. The segment covering 156–166 (KAARRGAARQR) has biased composition (basic residues). The CheB-type methylesterase domain maps to 171-363 (PAPGLVLIGT…AAVIEWGNAD (193 aa)). Active-site residues include S181, H208, and D305.

Belongs to the CheB family. Post-translationally, phosphorylated by CheA. Phosphorylation of the N-terminal regulatory domain activates the methylesterase activity.

The protein localises to the cytoplasm. It catalyses the reaction [protein]-L-glutamate 5-O-methyl ester + H2O = L-glutamyl-[protein] + methanol + H(+). The enzyme catalyses L-glutaminyl-[protein] + H2O = L-glutamyl-[protein] + NH4(+). Functionally, involved in chemotaxis. Part of a chemotaxis signal transduction system that modulates chemotaxis in response to various stimuli. Catalyzes the demethylation of specific methylglutamate residues introduced into the chemoreceptors (methyl-accepting chemotaxis proteins or MCP) by CheR. Also mediates the irreversible deamidation of specific glutamine residues to glutamic acid. This chain is Protein-glutamate methylesterase/protein-glutamine glutaminase 2, found in Rhodopseudomonas palustris (strain BisB18).